Reading from the N-terminus, the 466-residue chain is Chromosomal replication initiator protein DnaA (466 aa).

The segment at 1 to 86 is domain I, interacts with DnaA modulators; that stretch reads MSLSLWQQCL…EVGTKPVTQT (86 aa). Residues 86 to 129 form a domain II region; sequence TLKTPVHNVVAPTQTTTAQPQRVAPAARSGWDNVPAPAEPTYRS. The segment at 130 to 346 is domain III, AAA+ region; the sequence is NVNVKHTFDN…GALNRVIANA (217 aa). Positions 174, 176, 177, and 178 each coordinate ATP. A domain IV, binds dsDNA region spans residues 347–466; the sequence is NFTGRAITID…FSNLIRTLSS (120 aa).

The protein belongs to the DnaA family. Oligomerizes as a right-handed, spiral filament on DNA at oriC.

The protein localises to the cytoplasm. Its function is as follows. Plays an essential role in the initiation and regulation of chromosomal replication. ATP-DnaA binds to the origin of replication (oriC) to initiate formation of the DNA replication initiation complex once per cell cycle. Binds the DnaA box (a 9 base pair repeat at the origin) and separates the double-stranded (ds)DNA. Forms a right-handed helical filament on oriC DNA; dsDNA binds to the exterior of the filament while single-stranded (ss)DNA is stabiized in the filament's interior. The ATP-DnaA-oriC complex binds and stabilizes one strand of the AT-rich DNA unwinding element (DUE), permitting loading of DNA polymerase. After initiation quickly degrades to an ADP-DnaA complex that is not apt for DNA replication. Binds acidic phospholipids. This Salmonella dublin (strain CT_02021853) protein is Chromosomal replication initiator protein DnaA.